Here is a 182-residue protein sequence, read N- to C-terminus: ATP synthase subunit delta, organellar chromatophore (182 aa).

It belongs to the ATPase delta chain family. As to quaternary structure, F-type ATPases have 2 components, F(1) - the catalytic core - and F(0) - the membrane proton channel. F(1) has five subunits: alpha(3), beta(3), gamma(1), delta(1), epsilon(1). CF(0) has four main subunits: a(1), b(1), b'(1) and c(10-14). The alpha and beta chains form an alternating ring which encloses part of the gamma chain. F(1) is attached to F(0) by a central stalk formed by the gamma and epsilon chains, while a peripheral stalk is formed by the delta, b and b' chains.

The protein resides in the plastid. It localises to the organellar chromatophore thylakoid membrane. Functionally, f(1)F(0) ATP synthase produces ATP from ADP in the presence of a proton or sodium gradient. F-type ATPases consist of two structural domains, F(1) containing the extramembraneous catalytic core and F(0) containing the membrane proton channel, linked together by a central stalk and a peripheral stalk. During catalysis, ATP synthesis in the catalytic domain of F(1) is coupled via a rotary mechanism of the central stalk subunits to proton translocation. This protein is part of the stalk that links CF(0) to CF(1). It either transmits conformational changes from CF(0) to CF(1) or is implicated in proton conduction. This is ATP synthase subunit delta, organellar chromatophore from Paulinella chromatophora.